Here is a 209-residue protein sequence, read N- to C-terminus: MGKIEVINHPLIQHKLSILRRTDTSTKAFRELVDEIAMLMGYEVLRDLPLEDVEIETPITKTVQKQLAGKKLAIVPILRAGIGMVDGLLSLVPAAKVGHIGMYRDEETLQPVEYLVKLPEDIDQRQIFVVDPMLATGGSAILAVDSLKKRGASNIKFVCLVSAPEGVKALQEAHPDVEIFTAALDERLNEHGYIVPGLGDAGDRLFGTK.

Residues Arg79, Arg104, and 131–139 (DPMLATGGS) each bind 5-phospho-alpha-D-ribose 1-diphosphate. Uracil-binding positions include Ile194 and 199–201 (GDA). Asp200 provides a ligand contact to 5-phospho-alpha-D-ribose 1-diphosphate.

It belongs to the UPRTase family. It depends on Mg(2+) as a cofactor.

The enzyme catalyses UMP + diphosphate = 5-phospho-alpha-D-ribose 1-diphosphate + uracil. Its pathway is pyrimidine metabolism; UMP biosynthesis via salvage pathway; UMP from uracil: step 1/1. Its activity is regulated as follows. Allosterically activated by GTP. Functionally, catalyzes the conversion of uracil and 5-phospho-alpha-D-ribose 1-diphosphate (PRPP) to UMP and diphosphate. This chain is Uracil phosphoribosyltransferase, found in Streptococcus pneumoniae (strain ATCC BAA-255 / R6).